Here is a 152-residue protein sequence, read N- to C-terminus: Aspartate carbamoyltransferase regulatory chain (152 aa).

Zn(2+)-binding residues include Cys108, Cys113, Cys136, and Cys139.

This sequence belongs to the PyrI family. In terms of assembly, contains catalytic and regulatory chains. Zn(2+) is required as a cofactor.

Its function is as follows. Involved in allosteric regulation of aspartate carbamoyltransferase. This chain is Aspartate carbamoyltransferase regulatory chain, found in Thermococcus kodakarensis (strain ATCC BAA-918 / JCM 12380 / KOD1) (Pyrococcus kodakaraensis (strain KOD1)).